Consider the following 196-residue polypeptide: Molybdopterin synthase catalytic subunit (196 aa).

Substrate is bound by residues His-110–Arg-111, Lys-126, and Lys-133–Glu-135. The disordered stretch occupies residues Gly-142–Ser-196. The span at Ala-147–Met-168 shows a compositional bias: basic and acidic residues.

It belongs to the MoaE family. MOCS2B subfamily. As to quaternary structure, heterotetramer; composed of 2 small (MOCS2A) and 2 large (MOCS2B) subunits.

It is found in the cytoplasm. It carries out the reaction 2 [molybdopterin-synthase sulfur-carrier protein]-C-terminal-Gly-aminoethanethioate + cyclic pyranopterin phosphate + H2O = molybdopterin + 2 [molybdopterin-synthase sulfur-carrier protein]-C-terminal Gly-Gly + 2 H(+). The protein operates within cofactor biosynthesis; molybdopterin biosynthesis. In terms of biological role, catalytic subunit of the molybdopterin synthase complex, a complex that catalyzes the conversion of precursor Z into molybdopterin. Acts by mediating the incorporation of 2 sulfur atoms from thiocarboxylated MOCS2A into precursor Z to generate a dithiolene group. The chain is Molybdopterin synthase catalytic subunit from Sclerotinia sclerotiorum (strain ATCC 18683 / 1980 / Ss-1) (White mold).